Reading from the N-terminus, the 184-residue chain is UPF0397 protein SAB2561c (184 aa).

5 consecutive transmembrane segments (helical) span residues 11 to 31, 44 to 64, 77 to 97, 111 to 131, and 148 to 168; these read VVAIGIGAAVFVILGRFVVIP, AFLALISAIFGPFAGLMTGLV, AWWSWVICSGIIGCLYGWIGL, MIYFNIGQIIANIICWALIAP, and QGVISAVLNIISVGIIGTILL.

This sequence belongs to the UPF0397 family.

The protein localises to the cell membrane. The sequence is that of UPF0397 protein SAB2561c from Staphylococcus aureus (strain bovine RF122 / ET3-1).